The primary structure comprises 985 residues: Na(+)/H(+) antiporter (985 aa).

Residues 1-12 are Cytoplasmic-facing; that stretch reads MAIWEQLEVSKA. Residues 13-33 traverse the membrane as a helical segment; the sequence is HVAYACVGVFSSIFSLVSLYV. Residues 34-36 are Extracellular-facing; it reads KEK. The helical transmembrane segment at 37–57 threads the bilayer; it reads LYIGESTVAGIFGLIVGPVCL. At 58-70 the chain is on the cytoplasmic side; that stretch reads NWFNPLKWGNSDS. The chain crosses the membrane as a helical span at residues 71–91; sequence ITLEITRIVLCLQIFAVAVEL. The Extracellular segment spans residues 92-105; sequence PRKYMLKHWVSVTM. The helical transmembrane segment at 106-126 threads the bilayer; sequence LLLPVMTAGWLIIGLFVWILI. Residues 127–128 lie on the Cytoplasmic side of the membrane; that stretch reads PG. A helical transmembrane segment spans residues 129–149; it reads LNFSASLLISACITATDPILA. Residues 150–176 are Extracellular-facing; the sequence is QSVVSGKFAQRVPGHLRNLLSAESGCN. The helical transmembrane segment at 177–197 threads the bilayer; sequence DGMAFPFLFLSMNLILHPGNG. At 198–203 the chain is on the cytoplasmic side; sequence REIVKD. The chain crosses the membrane as a helical span at residues 204–224; it reads WICVTILYECLFGCLLGCFIG. Residues 225–244 lie on the Extracellular side of the membrane; that stretch reads YVGRITIRFAEKKNIIDRES. Residues 245–265 form a helical membrane-spanning segment; that stretch reads FLAFYVVLAFMCAGFGSILGV. Topologically, residues 266–294 are cytoplasmic; that stretch reads DDLLVSFAAGATFAWDGWFSQKTQESNVS. The chain crosses the membrane as a helical span at residues 295–315; sequence TVIDLLLNYAYFIYFGAIIPW. Over 316–319 the chain is Extracellular; the sequence is SQFN. A helical membrane pass occupies residues 320–340; it reads NGEIGTNVWRLIILSIVVIFL. At 341–361 the chain is on the cytoplasmic side; sequence RRIPAVMILRPLIPDIKSWRE. A helical membrane pass occupies residues 362–382; the sequence is ALFVGHFGPIGVGAIFAAILA. The Extracellular portion of the chain corresponds to 383 to 410; it reads RGELESTFSDEPTPLNVVPSKEESKHWQ. A helical membrane pass occupies residues 411-431; sequence LIACIWPITCFFIVTSIIVHG. Over 432–985 the chain is Cytoplasmic; sequence SSVAIITLGR…ALSKTLGLNK (554 aa). Disordered regions lie at residues 489–701 and 726–760; these read MTLS…KPGT and DRNE…GGRL. The segment covering 517 to 526 has biased composition (polar residues); it reads NNDQIGSVAT. Residues 538 to 558 are compositionally biased toward basic residues; the sequence is PRRRKLSRKEKRLNRRQKLRN. 2 stretches are compositionally biased toward basic and acidic residues: residues 559 to 572 and 580 to 593; these read KGRE…KNEM and DLGR…KEAR. Residue serine 568 is modified to Phosphoserine. Low complexity predominate over residues 637-646; it reads SFESSERSSS. The span at 661–675 shows a compositional bias: acidic residues; that stretch reads EETESEIESEDEMEN. The segment covering 676 to 698 has biased composition (basic and acidic residues); it reads ESERSMASSEERRIRKMKEEEMK. The segment covering 743-756 has biased composition (low complexity); sequence SSLTTTMTNLSSSS. Threonine 765 carries the post-translational modification Phosphothreonine. Phosphoserine is present on residues serine 768 and serine 774. Positions 812–985 are disordered; it reads INPHKSDDDK…ALSKTLGLNK (174 aa). 2 stretches are compositionally biased toward basic and acidic residues: residues 815-828 and 854-863; these read HKSD…RPRN and DEEKAIEGPS. A compositionally biased stretch (acidic residues) spans 887-920; the sequence is LDLEDEPSSEEDLGDSYNMDDSEDYDDNAYESET. The span at 970–979 shows a compositional bias: low complexity; it reads SAAVKSALSK.

This sequence belongs to the fungal Na(+)/H(+) exchanger family.

It is found in the cell membrane. Its function is as follows. Sodium export from cell, takes up external protons in exchange for internal sodium ions. Also capable of exporting potassium ions. This Saccharomyces cerevisiae (strain ATCC 204508 / S288c) (Baker's yeast) protein is Na(+)/H(+) antiporter (NHA1).